The primary structure comprises 638 residues: Phosphomethylpyrimidine synthase (638 aa).

Substrate is bound by residues N236, M265, Y294, H330, 350–352, 391–394, and E430; these read SRG and DGLR. H434 is a binding site for Zn(2+). Position 457 (Y457) interacts with substrate. H498 lines the Zn(2+) pocket. The [4Fe-4S] cluster site is built by C578, C581, and C586. Positions 608–624 are enriched in low complexity; it reads AEGASQQEAEQGMQEMS. The tract at residues 608-633 is disordered; that stretch reads AEGASQQEAEQGMQEMSQKYKDAGRR.

The protein belongs to the ThiC family. As to quaternary structure, homodimer. The cofactor is [4Fe-4S] cluster.

The enzyme catalyses 5-amino-1-(5-phospho-beta-D-ribosyl)imidazole + S-adenosyl-L-methionine = 4-amino-2-methyl-5-(phosphooxymethyl)pyrimidine + CO + 5'-deoxyadenosine + formate + L-methionine + 3 H(+). It participates in cofactor biosynthesis; thiamine diphosphate biosynthesis. Catalyzes the synthesis of the hydroxymethylpyrimidine phosphate (HMP-P) moiety of thiamine from aminoimidazole ribotide (AIR) in a radical S-adenosyl-L-methionine (SAM)-dependent reaction. This Hahella chejuensis (strain KCTC 2396) protein is Phosphomethylpyrimidine synthase.